A 395-amino-acid polypeptide reads, in one-letter code: Dihydroorotate dehydrogenase (quinone), mitochondrial (395 aa).

A mitochondrion; not cleaved-targeting transit peptide spans 1–10; the sequence is MAWRQLKKRA. Residues 1 to 10 lie on the Mitochondrial matrix side of the membrane; sequence MAWRQLKKRA. A helical transmembrane segment spans residues 11–30; it reads QDAMVILGGGGLLFASYLTA. The Mitochondrial intermembrane segment spans residues 31-395; sequence TGDEHFYAEL…TDAIGADHRR (365 aa). FMN-binding positions include 95–99 and Ser-119; that span reads AGFDK. Lys-99 lines the substrate pocket. 144–148 contributes to the substrate binding site; it reads NRYGF. FMN contacts are provided by Asn-180 and Asn-211. 211 to 216 contacts substrate; that stretch reads NVSSPN. Catalysis depends on Ser-214, which acts as the Nucleophile. FMN contacts are provided by Lys-254 and Thr-282. 283 to 284 is a substrate binding site; it reads NS. FMN is bound by residues Gly-305, Gly-334, and 355–356; that span reads YT.

This sequence belongs to the dihydroorotate dehydrogenase family. Type 2 subfamily. Monomer. FMN is required as a cofactor. In terms of processing, the uncleaved transit peptide is required for mitochondrial targeting and proper membrane integration.

It localises to the mitochondrion inner membrane. The catalysed reaction is (S)-dihydroorotate + a quinone = orotate + a quinol. The protein operates within pyrimidine metabolism; UMP biosynthesis via de novo pathway; orotate from (S)-dihydroorotate (quinone route): step 1/1. Catalyzes the conversion of dihydroorotate to orotate with quinone as electron acceptor. Required for UMP biosynthesis via de novo pathway. The sequence is that of Dihydroorotate dehydrogenase (quinone), mitochondrial (DHODH) from Bos taurus (Bovine).